A 291-amino-acid polypeptide reads, in one-letter code: Nucleotide-binding protein Cthe_0113 (291 aa).

ATP is bound at residue 8 to 15 (GISGAGKS). 59 to 62 (DIRG) is a GTP binding site.

It belongs to the RapZ-like family.

In terms of biological role, displays ATPase and GTPase activities. The chain is Nucleotide-binding protein Cthe_0113 from Acetivibrio thermocellus (strain ATCC 27405 / DSM 1237 / JCM 9322 / NBRC 103400 / NCIMB 10682 / NRRL B-4536 / VPI 7372) (Clostridium thermocellum).